The primary structure comprises 583 residues: Aspartate--tRNA ligase (583 aa).

L-aspartate is bound at residue glutamate 174. An aspartate region spans residues 198 to 201 (QITK). Residue arginine 220 coordinates L-aspartate. ATP-binding positions include 220-222 (RDE) and glutamine 229. Residue histidine 443 coordinates L-aspartate. Glutamate 477 is an ATP binding site. Residue arginine 484 coordinates L-aspartate. 529–532 (GLDR) contacts ATP.

Belongs to the class-II aminoacyl-tRNA synthetase family. Type 1 subfamily. Homodimer.

It is found in the cytoplasm. The catalysed reaction is tRNA(Asp) + L-aspartate + ATP = L-aspartyl-tRNA(Asp) + AMP + diphosphate. In terms of biological role, catalyzes the attachment of L-aspartate to tRNA(Asp) in a two-step reaction: L-aspartate is first activated by ATP to form Asp-AMP and then transferred to the acceptor end of tRNA(Asp). The polypeptide is Aspartate--tRNA ligase (Streptococcus thermophilus (strain CNRZ 1066)).